The chain runs to 1037 residues: Probable inorganic carbon transporter subunit DabA 1 (1037 aa).

Zn(2+) is bound by residues Cys460, Asp462, His719, and Cys734.

This sequence belongs to the inorganic carbon transporter (TC 9.A.2) DabA family. Forms a complex with DabB. The cofactor is Zn(2+).

The protein resides in the cell inner membrane. Its function is as follows. Part of an energy-coupled inorganic carbon pump. The sequence is that of Probable inorganic carbon transporter subunit DabA 1 from Nitrobacter winogradskyi (strain ATCC 25391 / DSM 10237 / CIP 104748 / NCIMB 11846 / Nb-255).